Consider the following 592-residue polypeptide: AT-rich interactive domain-containing protein 5A (592 aa).

The disordered stretch occupies residues 1 to 53 (MAPPVKGKRKQSEEGEPLDPPVSPQPDGEPRSRSPVRLEEPPEAGREREEEQE). Residues 1–299 (MAPPVKGKRK…AAPPLESPQS (299 aa)) are interaction with SOX9. Position 23 is a phosphoserine (Ser-23). Over residues 28–49 (GEPRSRSPVRLEEPPEAGRERE) the composition is skewed to basic and acidic residues. The ARID domain maps to 52 to 144 (QEEEQAFLVS…LVLPYVRHLK (93 aa)). Residues Lys-82 and Lys-91 each participate in a glycyl lysine isopeptide (Lys-Gly) (interchain with G-Cter in ubiquitin) cross-link. The interval 143–225 (LKGEDDKPLP…RGPAAGPSLP (83 aa)) is disordered. The segment covering 162 to 186 (MAKEPRGDDGATERPKKVKEEKRVD) has biased composition (basic and acidic residues). Ser-253 is modified (phosphoserine). The disordered stretch occupies residues 277-333 (CRHGAGGEPQAPPAAPPLESPQSPGGPAEDSRHRLTPLEGRQAPGGGLWGETQAGPR). Residues 286 to 295 (QAPPAAPPLE) are compositionally biased toward pro residues. 2 positions are modified to phosphoserine: Ser-438 and Ser-463.

In terms of assembly, interacts with SOX9. Interacts with ESR1. Interacts with RORC. Post-translationally, phosphorylated by MAPK14 on serine residues involving a TLR4 signaling pathway upon lipopolysaccharide (LPS) stimulation leading to its ubiquitination and proteasomal degradation. In terms of processing, ubiquitinated leading to proteasomal degradation; involving WWP1 linked to MAPK14-mediated phosphorylation upon LPS stimulation.

The protein resides in the nucleus. Its function is as follows. DNA-binding protein that may regulate transcription and act as a repressor by binding to AT-rich stretches in the promoter region of target genes. May act as repressor and down-regulate enhancer-dependent gene expressison. May positively regulate chondrocyte-specific transcription such as of COL2A1 in collaboration with SOX9 and positively regulate histone H3 acetylation at chondrocyte-specific genes. May stimulate early-stage chondrocyte differentiation and inhibit later stage differention. Can repress ESR1-mediated transcriptional activation; proposed to act as corepressor for selective nuclear hormone receptors. As an RNA-binding protein, involved in the regulation of inflammatory response by stabilizing selective inflammation-related mRNAs, such as STAT3 and TBX21. Also stabilizes IL6 mRNA. Binds to stem loop structures located in the 3'UTRs of IL6, STAT3 and TBX21 mRNAs; at least for STAT3 prevents binding of ZC3H12A to the mRNA stem loop structure thus inhibiting its degradation activity. Contributes to elevated IL6 levels possibly implicated in autoimmunity processes. IL6-dependent stabilization of STAT3 mRNA may promote differentiation of naive CD4+ T-cells into T-helper Th17 cells. In CD4+ T-cells may also inhibit RORC-induced Th17 cell differentiation independently of IL6 signaling. Stabilization of TBX21 mRNA contributes to elevated interferon-gamma secretion in Th1 cells possibly implicated in the establishment of septic shock. Stabilizes TNFRSF4/OX40 mRNA by binding to the conserved stem loop structure in its 3'UTR; thereby competing with the mRNA-destabilizing functions of RC3H1 and endoribonuclease ZC3H12A. This Bos taurus (Bovine) protein is AT-rich interactive domain-containing protein 5A (ARID5A).